Here is a 433-residue protein sequence, read N- to C-terminus: 3-phosphoshikimate 1-carboxyvinyltransferase (433 aa).

3-phosphoshikimate-binding residues include lysine 21, serine 22, and arginine 26. Residue lysine 21 participates in phosphoenolpyruvate binding. Phosphoenolpyruvate contacts are provided by glycine 92 and arginine 120. 3-phosphoshikimate-binding residues include serine 166, glutamine 168, aspartate 317, and lysine 344. Glutamine 168 contributes to the phosphoenolpyruvate binding site. The active-site Proton acceptor is aspartate 317. Arginine 348 and arginine 391 together coordinate phosphoenolpyruvate.

It belongs to the EPSP synthase family. As to quaternary structure, monomer.

It is found in the cytoplasm. It carries out the reaction 3-phosphoshikimate + phosphoenolpyruvate = 5-O-(1-carboxyvinyl)-3-phosphoshikimate + phosphate. Its pathway is metabolic intermediate biosynthesis; chorismate biosynthesis; chorismate from D-erythrose 4-phosphate and phosphoenolpyruvate: step 6/7. In terms of biological role, catalyzes the transfer of the enolpyruvyl moiety of phosphoenolpyruvate (PEP) to the 5-hydroxyl of shikimate-3-phosphate (S3P) to produce enolpyruvyl shikimate-3-phosphate and inorganic phosphate. This chain is 3-phosphoshikimate 1-carboxyvinyltransferase, found in Caldicellulosiruptor bescii (strain ATCC BAA-1888 / DSM 6725 / KCTC 15123 / Z-1320) (Anaerocellum thermophilum).